Here is a 98-residue protein sequence, read N- to C-terminus: UPF0251 protein Sbal_3699 (98 aa).

It belongs to the UPF0251 family.

The sequence is that of UPF0251 protein Sbal_3699 from Shewanella baltica (strain OS155 / ATCC BAA-1091).